A 191-amino-acid chain; its full sequence is Probable molybdenum cofactor guanylyltransferase (191 aa).

GTP-binding positions include 6-8, lysine 18, aspartate 67, and aspartate 92; that span reads LAG. Aspartate 92 contacts Mg(2+).

It belongs to the MobA family. It depends on Mg(2+) as a cofactor.

Its subcellular location is the cytoplasm. It catalyses the reaction Mo-molybdopterin + GTP + H(+) = Mo-molybdopterin guanine dinucleotide + diphosphate. Its function is as follows. Transfers a GMP moiety from GTP to Mo-molybdopterin (Mo-MPT) cofactor (Moco or molybdenum cofactor) to form Mo-molybdopterin guanine dinucleotide (Mo-MGD) cofactor. The protein is Probable molybdenum cofactor guanylyltransferase of Thermococcus gammatolerans (strain DSM 15229 / JCM 11827 / EJ3).